The chain runs to 229 residues: ATP synthase subunit a (229 aa).

Transmembrane regions (helical) follow at residues 25-45, 82-102, 104-124, 142-162, 181-201, and 202-222; these read ADAIAYTWLIIALLLILSMLA, FFPLIATLAIFILVSNLIGLV, GFFPPTANINTTAACAVIVFV, FLGPILWLAPMMFFIEVIGHF, LVLMIFFGLAPFLVPLPMMLM, and GVLVSFIQAFVFMLLAMIYIQ.

The protein belongs to the ATPase A chain family. In terms of assembly, F-type ATPases have 2 components, CF(1) - the catalytic core - and CF(0) - the membrane proton channel. CF(1) has five subunits: alpha(3), beta(3), gamma(1), delta(1), epsilon(1). CF(0) has three main subunits: a(1), b(2) and c(9-12). The alpha and beta chains form an alternating ring which encloses part of the gamma chain. CF(1) is attached to CF(0) by a central stalk formed by the gamma and epsilon chains, while a peripheral stalk is formed by the delta and b chains.

The protein localises to the cell inner membrane. Its function is as follows. Key component of the proton channel; it plays a direct role in the translocation of protons across the membrane. The protein is ATP synthase subunit a of Geotalea uraniireducens (strain Rf4) (Geobacter uraniireducens).